A 297-amino-acid polypeptide reads, in one-letter code: uncharacterized protein (297 aa).

The disordered stretch occupies residues 1 to 29; the sequence is MAESKAKNMFQKLSLTPKRNHEHDAGRNI. A compositionally biased stretch (basic and acidic residues) spans 19 to 29; it reads RNHEHDAGRNI.

This is an uncharacterized protein from Caenorhabditis elegans.